The chain runs to 204 residues: Large ribosomal subunit protein uL22m (204 aa).

A mitochondrion-targeting transit peptide spans 1 to 38 (MAAVILERLGALWVQNLRGKLALGILPQSHIHTSASLE).

It belongs to the universal ribosomal protein uL22 family. As to quaternary structure, component of the mitochondrial ribosome large subunit (39S) which comprises a 16S rRNA and about 50 distinct proteins.

Its subcellular location is the mitochondrion. This Bos taurus (Bovine) protein is Large ribosomal subunit protein uL22m (MRPL22).